Here is a 268-residue protein sequence, read N- to C-terminus: Probable histidine-binding protein (268 aa).

The N-terminal stretch at Met-1–Ala-20 is a signal peptide. Cys-21 is lipidated: N-palmitoyl cysteine. Cys-21 carries the S-diacylglycerol cysteine lipid modification.

This sequence belongs to the bacterial solute-binding protein 3 family.

It localises to the cell membrane. Functionally, involved in histidine transport. This chain is Probable histidine-binding protein (hisJ), found in Neisseria gonorrhoeae.